The primary structure comprises 329 residues: Acetyl-coenzyme A carboxylase carboxyl transferase subunit alpha (329 aa).

The region spanning 40–294 is the CoA carboxyltransferase C-terminal domain; that stretch reads QLESLAARRR…RAAIERHLEQ (255 aa).

Belongs to the AccA family. Acetyl-CoA carboxylase is a heterohexamer composed of biotin carboxyl carrier protein (AccB), biotin carboxylase (AccC) and two subunits each of ACCase subunit alpha (AccA) and ACCase subunit beta (AccD).

Its subcellular location is the cytoplasm. The catalysed reaction is N(6)-carboxybiotinyl-L-lysyl-[protein] + acetyl-CoA = N(6)-biotinyl-L-lysyl-[protein] + malonyl-CoA. It participates in lipid metabolism; malonyl-CoA biosynthesis; malonyl-CoA from acetyl-CoA: step 1/1. Component of the acetyl coenzyme A carboxylase (ACC) complex. First, biotin carboxylase catalyzes the carboxylation of biotin on its carrier protein (BCCP) and then the CO(2) group is transferred by the carboxyltransferase to acetyl-CoA to form malonyl-CoA. The sequence is that of Acetyl-coenzyme A carboxylase carboxyl transferase subunit alpha from Synechococcus sp. (strain CC9605).